We begin with the raw amino-acid sequence, 192 residues long: NADH dehydrogenase [ubiquinone] iron-sulfur protein 3 (192 aa).

This sequence belongs to the complex I 30 kDa subunit family. In terms of assembly, complex I is composed of about 45 different subunits. This is a component of the iron-sulfur (IP) fragment of the enzyme.

The protein localises to the mitochondrion inner membrane. It carries out the reaction a ubiquinone + NADH + 5 H(+)(in) = a ubiquinol + NAD(+) + 4 H(+)(out). Core subunit of the mitochondrial membrane respiratory chain NADH dehydrogenase (Complex I) that is believed to belong to the minimal assembly required for catalysis. Complex I functions in the transfer of electrons from NADH to the respiratory chain. The immediate electron acceptor for the enzyme is believed to be ubiquinone. In Beta trigyna (Caucasian wild beet), this protein is NADH dehydrogenase [ubiquinone] iron-sulfur protein 3 (NAD9).